Reading from the N-terminus, the 225-residue chain is Phosphoribosylformylglycinamidine synthase subunit PurQ (225 aa).

One can recognise a Glutamine amidotransferase type-1 domain in the interval 5-225 (RFGIVVFPGS…WQSIVQSLAG (221 aa)). Cysteine 89 functions as the Nucleophile in the catalytic mechanism. Active-site residues include histidine 198 and glutamate 200.

As to quaternary structure, part of the FGAM synthase complex composed of 1 PurL, 1 PurQ and 2 PurS subunits.

The protein localises to the cytoplasm. The catalysed reaction is N(2)-formyl-N(1)-(5-phospho-beta-D-ribosyl)glycinamide + L-glutamine + ATP + H2O = 2-formamido-N(1)-(5-O-phospho-beta-D-ribosyl)acetamidine + L-glutamate + ADP + phosphate + H(+). The enzyme catalyses L-glutamine + H2O = L-glutamate + NH4(+). Its pathway is purine metabolism; IMP biosynthesis via de novo pathway; 5-amino-1-(5-phospho-D-ribosyl)imidazole from N(2)-formyl-N(1)-(5-phospho-D-ribosyl)glycinamide: step 1/2. Part of the phosphoribosylformylglycinamidine synthase complex involved in the purines biosynthetic pathway. Catalyzes the ATP-dependent conversion of formylglycinamide ribonucleotide (FGAR) and glutamine to yield formylglycinamidine ribonucleotide (FGAM) and glutamate. The FGAM synthase complex is composed of three subunits. PurQ produces an ammonia molecule by converting glutamine to glutamate. PurL transfers the ammonia molecule to FGAR to form FGAM in an ATP-dependent manner. PurS interacts with PurQ and PurL and is thought to assist in the transfer of the ammonia molecule from PurQ to PurL. This chain is Phosphoribosylformylglycinamidine synthase subunit PurQ, found in Synechococcus sp. (strain JA-3-3Ab) (Cyanobacteria bacterium Yellowstone A-Prime).